A 386-amino-acid chain; its full sequence is MDLDLERGPPGPRRPPRGPPLSSSIGLALLLLLLALLFWLYIIMSNWTGGALLVLYAFALMLVIIILIIFIFRRDLLCPLGALCLLLLMITLLLIALWNLHGQALYLGIVLFIFGCLLVLGLWIYLLEILWRLGATIWQLLAFFLAFFLDIILLIIALYLQQNWWTLLVDLLWLLLFLAILIWMYYHGQRHSDEHHHDDSLPHPQQATDDSSNQSDSNSNEGRHLLLVSGAGDGPPLCSQNLGAPGGGPNNGPQDPDNTDDNGPQDPDNTDDNGPHDPLPQDPDNTDDNGPQDPDNTDDNGPHDPLPHNPSDSAGNDGGPPQLTEEVENKGGDQGPPLMTDGGGGHSHDSGHDGIDPHLPTLLLGTSGSGGDDDDPHGPVQLSYYD.

The Cytoplasmic segment spans residues 2–23 (DLDLERGPPGPRRPPRGPPLSS). Residues 24 to 44 (SIGLALLLLLLALLFWLYIIM) traverse the membrane as a helical segment. The Extracellular segment spans residues 45 to 51 (SNWTGGA). The helical transmembrane segment at 52–72 (LLVLYAFALMLVIIILIIFIF) threads the bilayer. Topologically, residues 73–75 (RRD) are cytoplasmic. A helical membrane pass occupies residues 76 to 96 (LLCPLGALCLLLLMITLLLIA). Residues 97 to 106 (LWNLHGQALY) are Extracellular-facing. Residues 107–127 (LGIVLFIFGCLLVLGLWIYLL) form a helical membrane-spanning segment. The Cytoplasmic segment spans residues 128-139 (EILWRLGATIWQ). A helical transmembrane segment spans residues 140–160 (LLAFFLAFFLDIILLIIALYL). The Extracellular segment spans residues 161–163 (QQN). Residues 164–184 (WWTLLVDLLWLLLFLAILIWM) form a helical membrane-spanning segment. The Cytoplasmic portion of the chain corresponds to 185 to 386 (YYHGQRHSDE…HGPVQLSYYD (202 aa)). The tract at residues 194–232 (EHHHDDSLPHPQQATDDSSNQSDSNSNEGRHLLLVSGAG) is CTAR1. The segment at 194-386 (EHHHDDSLPH…HGPVQLSYYD (193 aa)) is disordered. 2 stretches are compositionally biased toward low complexity: residues 209–220 (DDSSNQSDSNSN) and 251–267 (NGPQ…PQDP). The CTAR2 stretch occupies residues 342-386 (GGGGHSHDSGHDGIDPHLPTLLLGTSGSGGDDDDPHGPVQLSYYD). The span at 346–356 (HSHDSGHDGID) shows a compositional bias: basic and acidic residues. Low complexity predominate over residues 357–366 (PHLPTLLLGT).

This sequence belongs to the herpesviridae LMP-1 family. As to quaternary structure, interacts (via PXQXT motif) with host tumor necrosis factor receptor-associated factor (TRAF) proteins TRAF1, TRAF2, TRAF3 and TRAF5. Interacts with TRAF3; this interaction activates B lymphocytes. Interacts with human protein ZMYND11; leading to negatively regulate NF-kappa-B activation. Interacts with host UBE2I; this interaction induces the sumoylation of various cellular proteins. Interacts with host IRF7. Interacts with host TYK2. In terms of processing, ubiquitinated on the N-terminus.

The protein localises to the host cell membrane. Its function is as follows. Acts as a CD40 functional homolog to prevent apoptosis of infected B-lymphocytes and drive their proliferation. Functions as a constitutively active tumor necrosis factor receptor that induces the activation of several signaling pathways, including those of the NF-kappa-B family. LMP1 signaling leads to up-regulation of antiapoptotic proteins and provide growth signals in latently infected cells. Interacts with host UBE2I and subsequently affects the sumoylation state of several cellular proteins. For example, induces the sumoylation of host IRF7 thereby limiting its transcriptional activity and modulating the activation of innate immune responses. Also inhibits host IFN-alpha-stimulated STAT2 nuclear translocation and interferon-stimulated response element transcriptional activity by interacting with and inhibiting host TYK2. Induces SUMO expression during viral latency thereby dysregulating the host sumoylation processes. The protein is Latent membrane protein 1 (LMP1) of Homo sapiens (Human).